The chain runs to 258 residues: UPF0246 protein YaaA (258 aa).

The protein belongs to the UPF0246 family.

The protein is UPF0246 protein YaaA of Escherichia coli (strain 55989 / EAEC).